We begin with the raw amino-acid sequence, 273 residues long: Glutamate 5-kinase (273 aa).

Residue Lys-15 participates in ATP binding. Ser-55, Asp-142, and Asn-158 together coordinate substrate. Residues 178-179 and 220-226 each bind ATP; these read SD and TGGMLSK.

It belongs to the glutamate 5-kinase family.

The protein resides in the cytoplasm. It catalyses the reaction L-glutamate + ATP = L-glutamyl 5-phosphate + ADP. The protein operates within amino-acid biosynthesis; L-proline biosynthesis; L-glutamate 5-semialdehyde from L-glutamate: step 1/2. In terms of biological role, catalyzes the transfer of a phosphate group to glutamate to form L-glutamate 5-phosphate. This Streptococcus pyogenes serotype M6 (strain ATCC BAA-946 / MGAS10394) protein is Glutamate 5-kinase.